Reading from the N-terminus, the 190-residue chain is MSLLTVWPDTDAGTVELRTEDPQEITDVLKQFGVSFSRWELRELPERPSSEEVLEAYRAEVDEVIEREGYIKVDAAVMAPSQDPQWPAQAKAAREKFLSEHTHDDDEDRFFARGAGVFYLHIGDRVYAMLCEAGDLLSVPANTTHWFDMGTEPDFVAIRFFHDDDGWVGAFLNTDTAEKFPTFDELMASR.

Residues histidine 101, histidine 103, glutamate 107, and histidine 145 each contribute to the Fe(2+) site. Ni(2+) is bound by residues histidine 101, histidine 103, glutamate 107, and histidine 145.

This sequence belongs to the acireductone dioxygenase (ARD) family. As to quaternary structure, monomer. Fe(2+) is required as a cofactor. Ni(2+) serves as cofactor.

It catalyses the reaction 1,2-dihydroxy-5-(methylsulfanyl)pent-1-en-3-one + O2 = 3-(methylsulfanyl)propanoate + CO + formate + 2 H(+). The enzyme catalyses 1,2-dihydroxy-5-(methylsulfanyl)pent-1-en-3-one + O2 = 4-methylsulfanyl-2-oxobutanoate + formate + 2 H(+). The protein operates within amino-acid biosynthesis; L-methionine biosynthesis via salvage pathway; L-methionine from S-methyl-5-thio-alpha-D-ribose 1-phosphate: step 5/6. In terms of biological role, catalyzes 2 different reactions between oxygen and the acireductone 1,2-dihydroxy-3-keto-5-methylthiopentene (DHK-MTPene) depending upon the metal bound in the active site. Fe-containing acireductone dioxygenase (Fe-ARD) produces formate and 2-keto-4-methylthiobutyrate (KMTB), the alpha-ketoacid precursor of methionine in the methionine recycle pathway. Ni-containing acireductone dioxygenase (Ni-ARD) produces methylthiopropionate, carbon monoxide and formate, and does not lie on the methionine recycle pathway. The sequence is that of Acireductone dioxygenase from Saccharopolyspora erythraea (strain ATCC 11635 / DSM 40517 / JCM 4748 / NBRC 13426 / NCIMB 8594 / NRRL 2338).